Reading from the N-terminus, the 407-residue chain is MKPTVWHHLRLCPHGHPDETIDDAAIAVDETGAIVWLGACAALPHGYAHWRREDLHGAWVTPGLVDCHTHLVYGGTRADEFAQRLAGVSYEEIARQGGGIVSTVRATRAADETALFVQAAARLQPLLAEGVTAIEIKSGYGLDLASERKMLRVARQLGERFPVSVYTTFLGAHALPPEYAGRADAYIDEICERMLPTLADEGLIDAVDVFCERIGFSLAQTERVFEAATRRGLPVKLHAEQLSDAGGTALAARYHALSADHLEFLDEAGIEAMKAAGTVAVLLPGAYYFIRETQLPPIDLLRRHGVPIALATDHNPGTSPLESLLLTMNLGCTLFRMTVPEVLQGVTRHAAAALGRADRHGALEVGRQADFAVWSVGSLAELAYWIGRPLCEQVVRGGTTVFRRMIG.

Residues H68 and H70 each contribute to the Fe(3+) site. Zn(2+) is bound by residues H68 and H70. The 4-imidazolone-5-propanoate site is built by R77, Y140, and H173. Y140 serves as a coordination point for N-formimidoyl-L-glutamate. H238 contacts Fe(3+). A Zn(2+)-binding site is contributed by H238. Q241 lines the 4-imidazolone-5-propanoate pocket. D313 provides a ligand contact to Fe(3+). Position 313 (D313) interacts with Zn(2+). 2 residues coordinate N-formimidoyl-L-glutamate: N315 and G317. T318 contributes to the 4-imidazolone-5-propanoate binding site.

This sequence belongs to the metallo-dependent hydrolases superfamily. HutI family. Requires Zn(2+) as cofactor. The cofactor is Fe(3+).

The protein resides in the cytoplasm. The enzyme catalyses 4-imidazolone-5-propanoate + H2O = N-formimidoyl-L-glutamate. It participates in amino-acid degradation; L-histidine degradation into L-glutamate; N-formimidoyl-L-glutamate from L-histidine: step 3/3. Functionally, catalyzes the hydrolytic cleavage of the carbon-nitrogen bond in imidazolone-5-propanoate to yield N-formimidoyl-L-glutamate. It is the third step in the universal histidine degradation pathway. The sequence is that of Imidazolonepropionase from Burkholderia multivorans (strain ATCC 17616 / 249).